Here is a 149-residue protein sequence, read N- to C-terminus: Calmodulin (149 aa).

Alanine 2 carries the N-acetylalanine modification. 4 consecutive EF-hand domains span residues 8-43 (EQIAEFKEAFSLFDKDGDGTITTKELGTVMRSLGQN), 44-79 (PTEAELQDMINEVDSDGNGTIDFPEFLSLMARKMKD), 81-116 (DTEEELIEAFKVFDRDGNGFISAAELRHVMTNLGEK), and 117-149 (LTDEEVDEMIREADVDGDGQINYEEFVKMMMAK). The Ca(2+) site is built by aspartate 21, aspartate 23, aspartate 25, threonine 27, glutamate 32, aspartate 57, aspartate 59, asparagine 61, threonine 63, glutamate 68, aspartate 94, aspartate 96, asparagine 98, and glutamate 105. An N6,N6,N6-trimethyllysine modification is found at lysine 116. Residues aspartate 130, aspartate 132, aspartate 134, glutamine 136, and glutamate 141 each coordinate Ca(2+).

It belongs to the calmodulin family.

Its function is as follows. Calmodulin mediates the control of a large number of enzymes, ion channels and other proteins by Ca(2+). Among the enzymes to be stimulated by the calmodulin-Ca(2+) complex are a number of protein kinases and phosphatases. The chain is Calmodulin from Heterocapsa triquetra (Dinoflagellate).